The chain runs to 259 residues: Glutathione S-transferase domain-containing protein DDB_G0274705 (259 aa).

The 90-residue stretch at 7 to 96 (KIDYIFYTNN…YLAQKFNTFL (90 aa)) folds into the GST N-terminal domain. Residues 102–232 (NPLENSEVIT…GFKNFNPSLL (131 aa)) form the GST C-terminal domain.

Belongs to the GST superfamily.

This Dictyostelium discoideum (Social amoeba) protein is Glutathione S-transferase domain-containing protein DDB_G0274705.